Here is a 160-residue protein sequence, read N- to C-terminus: Nitrate reductase [NADH] (160 aa).

Thr-37 contacts FAD.

It belongs to the nitrate reductase family. Homodimer. FAD is required as a cofactor. The cofactor is heme. Mo-molybdopterin serves as cofactor.

It catalyses the reaction nitrite + NAD(+) + H2O = nitrate + NADH + H(+). Its function is as follows. Nitrate reductase is a key enzyme involved in the first step of nitrate assimilation in plants, fungi and bacteria. The polypeptide is Nitrate reductase [NADH] (NIA) (Lotus tetragonolobus (Winged pea)).